The following is an 81-amino-acid chain: Small ribosomal subunit protein bS20 (81 aa).

It belongs to the bacterial ribosomal protein bS20 family.

Its function is as follows. Binds directly to 16S ribosomal RNA. This chain is Small ribosomal subunit protein bS20, found in Mycoplasma mycoides subsp. mycoides SC (strain CCUG 32753 / NCTC 10114 / PG1).